A 330-amino-acid polypeptide reads, in one-letter code: Ketol-acid reductoisomerase (NADP(+)) (330 aa).

The KARI N-terminal Rossmann domain occupies 1 to 181 (MNVYYEQDAD…GGTKAGVIET (181 aa)). Residues 24–27 (YGSQ), arginine 47, serine 50, serine 52, and 82–85 (DQTQ) contribute to the NADP(+) site. Histidine 107 is a catalytic residue. Glycine 133 contributes to the NADP(+) binding site. One can recognise a KARI C-terminal knotted domain in the interval 182-327 (NFKDETETDL…AKLRNMMSWL (146 aa)). The Mg(2+) site is built by aspartate 190, glutamate 194, glutamate 226, and glutamate 230. Serine 251 contacts substrate.

This sequence belongs to the ketol-acid reductoisomerase family. Mg(2+) is required as a cofactor.

The enzyme catalyses (2R)-2,3-dihydroxy-3-methylbutanoate + NADP(+) = (2S)-2-acetolactate + NADPH + H(+). The catalysed reaction is (2R,3R)-2,3-dihydroxy-3-methylpentanoate + NADP(+) = (S)-2-ethyl-2-hydroxy-3-oxobutanoate + NADPH + H(+). Its pathway is amino-acid biosynthesis; L-isoleucine biosynthesis; L-isoleucine from 2-oxobutanoate: step 2/4. It participates in amino-acid biosynthesis; L-valine biosynthesis; L-valine from pyruvate: step 2/4. Functionally, involved in the biosynthesis of branched-chain amino acids (BCAA). Catalyzes an alkyl-migration followed by a ketol-acid reduction of (S)-2-acetolactate (S2AL) to yield (R)-2,3-dihydroxy-isovalerate. In the isomerase reaction, S2AL is rearranged via a Mg-dependent methyl migration to produce 3-hydroxy-3-methyl-2-ketobutyrate (HMKB). In the reductase reaction, this 2-ketoacid undergoes a metal-dependent reduction by NADPH to yield (R)-2,3-dihydroxy-isovalerate. The protein is Ketol-acid reductoisomerase (NADP(+)) of Chlorobium luteolum (strain DSM 273 / BCRC 81028 / 2530) (Pelodictyon luteolum).